The primary structure comprises 247 residues: UPF0309 protein LMOf2365_2617 (247 aa).

An SIS domain is found at 31-214 (VAESIENDGV…ETMVNDNFTP (184 aa)).

Belongs to the UPF0309 family.

The chain is UPF0309 protein LMOf2365_2617 from Listeria monocytogenes serotype 4b (strain F2365).